A 187-amino-acid polypeptide reads, in one-letter code: Peptidyl-tRNA hydrolase (187 aa).

Tyrosine 14 is a tRNA binding site. Histidine 19 serves as the catalytic Proton acceptor. Positions 64, 66, and 112 each coordinate tRNA.

The protein belongs to the PTH family. As to quaternary structure, monomer.

It is found in the cytoplasm. The catalysed reaction is an N-acyl-L-alpha-aminoacyl-tRNA + H2O = an N-acyl-L-amino acid + a tRNA + H(+). In terms of biological role, hydrolyzes ribosome-free peptidyl-tRNAs (with 1 or more amino acids incorporated), which drop off the ribosome during protein synthesis, or as a result of ribosome stalling. Functionally, catalyzes the release of premature peptidyl moieties from peptidyl-tRNA molecules trapped in stalled 50S ribosomal subunits, and thus maintains levels of free tRNAs and 50S ribosomes. This chain is Peptidyl-tRNA hydrolase, found in Bdellovibrio bacteriovorus (strain ATCC 15356 / DSM 50701 / NCIMB 9529 / HD100).